A 258-amino-acid polypeptide reads, in one-letter code: uncharacterized protein (258 aa).

This is an uncharacterized protein from Mycobacterium tuberculosis (strain CDC 1551 / Oshkosh).